Consider the following 1257-residue polypeptide: Neural cell adhesion molecule L1 (1257 aa).

The N-terminal stretch at 1 to 19 (MVVALRYVWPLLLCSPCLL) is a signal peptide. Topologically, residues 20-1120 (IQIPEEYEGH…RLPPAGFATE (1101 aa)) are extracellular. 6 Ig-like C2-type domains span residues 35–125 (PVIT…TAMS), 139–226 (PKET…EPID), 240–328 (PRLL…YYVT), 333–420 (PYWL…AYIY), 425–507 (PAKI…NNVT), and 518–607 (TQIT…AQLL). Disulfide bonds link C57-C114 and C158-C209. N-linked (GlcNAc...) asparagine glycans are attached at residues N100, N203, N247, and N294. Intrachain disulfides connect C264/C312 and C354/C404. N-linked (GlcNAc...) asparagine glycans are attached at residues N433, N479, N490, and N505. Cysteines 448 and 497 form a disulfide. The cysteines at positions 539 and 591 are disulfide-linked. The Cell attachment site motif lies at 554–556 (RGD). Residues N588 and N671 are each glycosylated (N-linked (GlcNAc...) asparagine). 5 consecutive Fibronectin type-III domains span residues 615–712 (VPRL…TPEA), 717–810 (NPVD…SGED), 814–916 (AIPE…TPEG), 920–1015 (HPEA…MALS), and 1016–1115 (GISD…LPPA). Residues 698-725 (GEPSPVSETVVTPEAAPEKNPVDVKGEG) form a disordered region. The segment covering 713–725 (APEKNPVDVKGEG) has biased composition (basic and acidic residues). N726, N777, N825, N849, N876, N979, N1022, N1030, N1071, and N1105 each carry an N-linked (GlcNAc...) asparagine glycan. A helical transmembrane segment spans residues 1121-1143 (GWFIGFVSAIILLLLVLLILCFI). Residues 1144–1257 (KRSKGGKYSV…SPINPAVALE (114 aa)) lie on the Cytoplasmic side of the membrane. A phosphoserine mark is found at S1163, T1172, R1177, and S1178. A compositionally biased stretch (basic and acidic residues) spans 1176–1187 (YRSLESDNEEKA). Disordered stretches follow at residues 1176–1207 (YRSL…SDDS) and 1226–1257 (IGQY…VALE). At S1181 the chain carries Phosphoserine; by CaMK2. S1194, S1243, S1244, and S1248 each carry phosphoserine. Over residues 1241 to 1250 (NDSSGATSPI) the composition is skewed to polar residues.

The protein belongs to the immunoglobulin superfamily. L1/neurofascin/NgCAM family. As to quaternary structure, interacts with SHTN1; the interaction occurs in axonal growth cones. Interacts with isoform 2 of BSG.

It localises to the cell membrane. Its subcellular location is the cell projection. The protein resides in the growth cone. The protein localises to the axon. It is found in the dendrite. Its function is as follows. Neural cell adhesion molecule involved in the dynamics of cell adhesion and in the generation of transmembrane signals at tyrosine kinase receptors. During brain development, critical in multiple processes, including neuronal migration, axonal growth and fasciculation, and synaptogenesis. In the mature brain, plays a role in the dynamics of neuronal structure and function, including synaptic plasticity. The chain is Neural cell adhesion molecule L1 (L1CAM) from Homo sapiens (Human).